A 125-amino-acid chain; its full sequence is Transmembrane protein 14EP (125 aa).

2 helical membrane passes run Val-9–Gly-29 and Ile-81–Ser-101.

The protein belongs to the TMEM14 family.

The protein localises to the membrane. The sequence is that of Transmembrane protein 14EP (TMEM14EP) from Homo sapiens (Human).